A 233-amino-acid chain; its full sequence is UPF0128 protein MJ1463 (233 aa).

This sequence belongs to the UPF0128 family.

This is UPF0128 protein MJ1463 from Methanocaldococcus jannaschii (strain ATCC 43067 / DSM 2661 / JAL-1 / JCM 10045 / NBRC 100440) (Methanococcus jannaschii).